A 113-amino-acid polypeptide reads, in one-letter code: MHEMSLAEGVLQLVEDTARRESASRVKLVVLEIGRLSSVEPEAIKFCFEAVTHGSIAQGAALEIIAVPGAGWCMQCAETVPMTELYGACPTCGSHQVQPTGGTEMRVKEIEIE.

Residue His-2 participates in Ni(2+) binding. Zn(2+) is bound by residues Cys-73, Cys-76, Cys-89, and Cys-92.

Belongs to the HypA/HybF family.

Its function is as follows. Involved in the maturation of [NiFe] hydrogenases. Required for nickel insertion into the metal center of the hydrogenase. This chain is Hydrogenase maturation factor HypA, found in Dechloromonas aromatica (strain RCB).